A 541-amino-acid chain; its full sequence is Tegument protein UL21 homolog (541 aa).

This sequence belongs to the alphaherpesvirinae UL21 protein family. As to quaternary structure, interacts (via C-terminus) with UL16.

It is found in the virion tegument. The protein resides in the host cytoplasm. The protein localises to the host nucleus. In terms of biological role, may participate in DNA packaging/capsid maturation events. Promotes efficient incorporation of tegument proteins UL46, UL49, and US3 homologs into virions. May also play a role in capsid transport to the trans-Golgi network (TGN). The sequence is that of Tegument protein UL21 homolog from Varicella-zoster virus (strain Oka vaccine) (HHV-3).